Here is a 529-residue protein sequence, read N- to C-terminus: Tyrosinase (529 aa).

The signal sequence occupies residues 1-18 (MLLAVLYCLLWSFQTSAG). The Lumenal, melanosome portion of the chain corresponds to 19-476 (HFPRACVSSK…YLEQASRIWS (458 aa)). N-linked (GlcNAc...) asparagine glycosylation is found at Asn-86, Asn-111, and Asn-161. Residues His-180, His-202, and His-211 each contribute to the Cu cation site. A glycan (N-linked (GlcNAc...) asparagine) is linked at Asn-230. The disordered stretch occupies residues 287 to 313 (SLCNGTPEGPLRRNPGNHDKSRTPRLP). An N-linked (GlcNAc...) asparagine glycan is attached at Asn-337. Residues His-363 and His-367 each coordinate Cu cation. Asn-371 is a glycosylation site (N-linked (GlcNAc...) asparagine). Position 390 (His-390) interacts with Cu cation. The chain crosses the membrane as a helical span at residues 477–497 (WLLGAAMVGAVLTALLAGLVS). Topologically, residues 498–529 (LLCRHKRKQLPEEKQPLLMEKEDYHSLYQSHL) are cytoplasmic.

This sequence belongs to the tyrosinase family. As to quaternary structure, forms an OPN3-dependent complex with DCT in response to blue light in melanocytes. Cu(2+) is required as a cofactor. Glycosylated.

It localises to the melanosome membrane. The protein localises to the melanosome. The enzyme catalyses 2 L-dopa + O2 = 2 L-dopaquinone + 2 H2O. The catalysed reaction is L-tyrosine + O2 = L-dopaquinone + H2O. It carries out the reaction 2 5,6-dihydroxyindole-2-carboxylate + O2 = 2 indole-5,6-quinone-2-carboxylate + 2 H2O. In terms of biological role, this is a copper-containing oxidase that functions in the formation of pigments such as melanins and other polyphenolic compounds. Catalyzes the initial and rate limiting step in the cascade of reactions leading to melanin production from tyrosine. In addition to hydroxylating tyrosine to DOPA (3,4-dihydroxyphenylalanine), also catalyzes the oxidation of DOPA to DOPA-quinone, and possibly the oxidation of DHI (5,6-dihydroxyindole) to indole-5,6 quinone. This chain is Tyrosinase, found in Homo sapiens (Human).